We begin with the raw amino-acid sequence, 87 residues long: MANHKSAEKRARQTIKKTERNRFYRTRLKNITKAVREAAANGNKNAANEALKVANKSIHAMVSRGFIKKQTASRRVSRLALLVNKIA.

Residues methionine 1 to arginine 20 form a disordered region.

This sequence belongs to the bacterial ribosomal protein bS20 family.

In terms of biological role, binds directly to 16S ribosomal RNA. This chain is Small ribosomal subunit protein bS20, found in Campylobacter jejuni subsp. jejuni serotype O:2 (strain ATCC 700819 / NCTC 11168).